A 902-amino-acid polypeptide reads, in one-letter code: Zinc finger CCCH-type antiviral protein 1 (902 aa).

A2 is subject to N-acetylalanine. The interval 2 to 254 is N-terminal domain; the sequence is ADPEVCCFIT…ARSKSRDRFF (253 aa). Residues 69-76 carry the Nuclear localization signal motif; that stretch reads RARVCRRK. 4 C3H1-type zinc fingers span residues 73–86, 88–110, 150–172, and 169–193; these read CRRK…DNLH, CKLN…KYSH, CKSY…SRLH, and SRLH…SHNL. Residues 221–251 are disordered; it reads SKHMQKNPPGPRAPSSHRRNMAYRARSKSRD. The interval 224 to 254 is binding to EXOSC5; the sequence is MQKNPPGPRAPSSHRRNMAYRARSKSRDRFF. Basic residues predominate over residues 235-247; it reads SSHRRNMAYRARS. Phosphoserine; by GSK3-beta is present on residues S257, S263, S267, and S271. Polar residues predominate over residues 265–278; it reads SASAERSCTPSPDQ. 2 disordered regions span residues 265–287 and 299–373; these read SASA…SLED and YLGS…GARR. The residue at position 273 (T273) is a Phosphothreonine. Phosphoserine is present on residues S275 and S284. Residues 285–292 carry the Nuclear export signal motif; the sequence is LEDAPVDD. Phosphoserine occurs at positions 302, 327, 335, 355, 378, and 387. 2 stretches are compositionally biased toward polar residues: residues 310-336 and 344-369; these read SGSS…NGSQ and PGST…TNDQ. T393 is subject to Phosphothreonine. Phosphoserine occurs at positions 407, 469, 492, and 494. Positions 445–481 are disordered; sequence LNYKSTSSGHREISSPRIQDAGPASRDVQATGRIADD. T554 bears the Phosphothreonine mark. Phosphoserine is present on residues Y572 and S590. Residues 594–681 form the WWE domain; the sequence is SVTKPANSVF…ASKTQKDVIR (88 aa). Positions 716–902 constitute a PARP catalytic domain; that stretch reads PQEDFCFLSS…YTEDKACVIS (187 aa).

This sequence belongs to the ARTD/PARP family. Homodimer or homooligomer. Homooligomerization is essential for its antiviral activity. Interacts with EXOSC5. Interacts (via N-terminal domain) with DDX17 in an RNA-independent manner. Interacts with EXOSC3, EXOSC7, DCP2 and DCP1A. Interacts with PARN in an RNA-independent manner. Interacts with XRN1 in an RNA-dependent manner. Isoform 2 interacts (via zinc-fingers) with RIGI in an RNA-dependent manner. Interacts (via N-terminal domain) with DHX30 (via N-terminus) in an RNA-independent manner. Phosphorylation at Ser-275 is essential for sequential phosphorylation of Ser-271, Ser-267, Ser-263 and Ser-257 by GSK3-beta. Phosphorylation by GSK3-beta enhances its antiviral activity.

Its subcellular location is the cytoplasm. The protein localises to the nucleus. Its function is as follows. Antiviral protein which inhibits the replication of viruses by recruiting the cellular RNA degradation machineries to degrade the viral mRNAs. Binds to a ZAP-responsive element (ZRE) present in the target viral mRNA, recruits cellular poly(A)-specific ribonuclease PARN to remove the poly(A) tail, and the 3'-5' exoribonuclease complex exosome to degrade the RNA body from the 3'-end. It also recruits the decapping complex DCP1-DCP2 through RNA helicase p72 (DDX17) to remove the cap structure of the viral mRNA to initiate its degradation from the 5'-end. Its target viruses belong to families which include retroviridae: human immunodeficiency virus type 1 (HIV-1), moloney and murine leukemia virus (MoMLV) and xenotropic MuLV-related virus (XMRV), filoviridae: ebola virus (EBOV) and marburg virus (MARV), togaviridae: sindbis virus (SINV) and Ross river virus (RRV). Specifically targets the multiply spliced but not unspliced or singly spliced HIV-1 mRNAs for degradation. Isoform 1 is a more potent viral inhibitor than isoform 2. Isoform 2 acts as a positive regulator of RIGI signaling resulting in activation of the downstream effector IRF3 leading to the expression of type I IFNs and IFN stimulated genes (ISGs). The chain is Zinc finger CCCH-type antiviral protein 1 from Homo sapiens (Human).